A 343-amino-acid chain; its full sequence is Small ribosomal subunit biogenesis GTPase RsgA (343 aa).

Positions 116-275 constitute a CP-type G domain; that stretch reads RGQLKPVAAN…LIDSPGIREF (160 aa). Residues 163 to 166 and 217 to 225 each bind GTP; these read NKAD and GQSGVGKSS. 4 residues coordinate Zn(2+): cysteine 299, cysteine 304, histidine 306, and cysteine 312.

This sequence belongs to the TRAFAC class YlqF/YawG GTPase family. RsgA subfamily. In terms of assembly, monomer. Associates with 30S ribosomal subunit, binds 16S rRNA. Requires Zn(2+) as cofactor.

It localises to the cytoplasm. Its function is as follows. One of several proteins that assist in the late maturation steps of the functional core of the 30S ribosomal subunit. Helps release RbfA from mature subunits. May play a role in the assembly of ribosomal proteins into the subunit. Circularly permuted GTPase that catalyzes slow GTP hydrolysis, GTPase activity is stimulated by the 30S ribosomal subunit. The sequence is that of Small ribosomal subunit biogenesis GTPase RsgA from Pseudomonas fluorescens (strain ATCC BAA-477 / NRRL B-23932 / Pf-5).